A 349-amino-acid polypeptide reads, in one-letter code: 4-hydroxythreonine-4-phosphate dehydrogenase (349 aa).

Substrate-binding residues include H141 and T142. 3 residues coordinate a divalent metal cation: H176, H221, and H276. Substrate is bound by residues K284, N293, and R302.

This sequence belongs to the PdxA family. Homodimer. Requires Zn(2+) as cofactor. Mg(2+) is required as a cofactor. Co(2+) serves as cofactor.

Its subcellular location is the cytoplasm. It catalyses the reaction 4-(phosphooxy)-L-threonine + NAD(+) = 3-amino-2-oxopropyl phosphate + CO2 + NADH. Its pathway is cofactor biosynthesis; pyridoxine 5'-phosphate biosynthesis; pyridoxine 5'-phosphate from D-erythrose 4-phosphate: step 4/5. Its function is as follows. Catalyzes the NAD(P)-dependent oxidation of 4-(phosphooxy)-L-threonine (HTP) into 2-amino-3-oxo-4-(phosphooxy)butyric acid which spontaneously decarboxylates to form 3-amino-2-oxopropyl phosphate (AHAP). The chain is 4-hydroxythreonine-4-phosphate dehydrogenase from Methylorubrum extorquens (strain CM4 / NCIMB 13688) (Methylobacterium extorquens).